The primary structure comprises 207 residues: NADH-ubiquinone oxidoreductase chain 6 (207 aa).

Transmembrane regions (helical) follow at residues 15-35 (ILLD…ILVS), 40-60 (SILY…LIGI), 66-86 (LYIL…LSLF), 116-136 (LFIL…NNIY), and 184-204 (ILLI…IVLT).

It belongs to the complex I subunit 6 family.

The protein localises to the mitochondrion membrane. The catalysed reaction is a ubiquinone + NADH + 5 H(+)(in) = a ubiquinol + NAD(+) + 4 H(+)(out). Core subunit of the mitochondrial membrane respiratory chain NADH dehydrogenase (Complex I) that is believed to belong to the minimal assembly required for catalysis. Complex I functions in the transfer of electrons from NADH to the respiratory chain. The immediate electron acceptor for the enzyme is believed to be ubiquinone. This is NADH-ubiquinone oxidoreductase chain 6 (ND6) from Wickerhamomyces canadensis (Yeast).